A 310-amino-acid chain; its full sequence is uncharacterized protein (310 aa).

A run of 5 helical transmembrane segments spans residues 10–30, 44–64, 78–98, 113–133, and 161–181; these read AVLS…AYAI, TVNL…ATPA, FSSG…GYSA, LGIA…WILW, and VVVA…PLIA. Over residues 285-297 the composition is skewed to basic and acidic residues; it reads PLEDPKSWQHPDE. The tract at residues 285–310 is disordered; it reads PLEDPKSWQHPDEFPPSAPLNRDKPN.

The protein belongs to the cation diffusion facilitator (CDF) transporter (TC 2.A.4) family.

Its subcellular location is the cell membrane. This is an uncharacterized protein from Synechocystis sp. (strain ATCC 27184 / PCC 6803 / Kazusa).